The primary structure comprises 223 residues: Deoxyribose-phosphate aldolase (223 aa).

The Proton donor/acceptor role is filled by aspartate 91. The active-site Schiff-base intermediate with acetaldehyde is lysine 154. The Proton donor/acceptor role is filled by lysine 183.

Belongs to the DeoC/FbaB aldolase family. DeoC type 1 subfamily.

Its subcellular location is the cytoplasm. The catalysed reaction is 2-deoxy-D-ribose 5-phosphate = D-glyceraldehyde 3-phosphate + acetaldehyde. The protein operates within carbohydrate degradation; 2-deoxy-D-ribose 1-phosphate degradation; D-glyceraldehyde 3-phosphate and acetaldehyde from 2-deoxy-alpha-D-ribose 1-phosphate: step 2/2. Catalyzes a reversible aldol reaction between acetaldehyde and D-glyceraldehyde 3-phosphate to generate 2-deoxy-D-ribose 5-phosphate. This chain is Deoxyribose-phosphate aldolase, found in Geobacillus sp. (strain WCH70).